The sequence spans 818 residues: Exchange factor for Arf-6 (818 aa).

Disordered stretches follow at residues 92-123 (AQKLSRLPVPVSTSQIERRGSLARKTSEESSP), 137-168 (MESTDVEESEEETVMMTTDEKENQKKPNENDD), 208-291 (NHHH…GVSN), and 326-383 (RTTP…VGGE). A compositionally biased stretch (basic and acidic residues) spans 107 to 119 (IERRGSLARKTSE). The span at 140–149 (TDVEESEEET) shows a compositional bias: acidic residues. Over residues 154 to 165 (TDEKENQKKPNE) the composition is skewed to basic and acidic residues. 2 stretches are compositionally biased toward polar residues: residues 213-223 (YNSSPQISTLS) and 255-269 (MSNNSHQQSFRSPEN). The span at 326–347 (RTTPNTAASNSSASASPSLHAT) shows a compositional bias: low complexity. In terms of domain architecture, SEC7 spans 356–532 (GVSLRSAESS…KTLFQSIKDN (177 aa)). Positions 361-380 (SAESSNLNQTAVPSTSTNSV) are enriched in polar residues. A PH domain is found at 569–681 (VEYYSGFLMR…WCEKINFVAA (113 aa)). A compositionally biased stretch (polar residues) spans 782–799 (TMNIMMTPTRRQQQNQKP). Residues 782-818 (TMNIMMTPTRRQQQNQKPVVSEDRLSYTDAVNGAAAH) are disordered.

Interacts (via short N-terminal region) with microtubule-associated proteins tac-1 and zyg-8.

It localises to the cytoplasm. Its subcellular location is the cell cortex. It is found in the cell membrane. Guanine nucleotide exchange factor for arf-6. Involved in response to injury in mechanosensory neurons. Inhibits axon regrowth via microtubule dynamics, possibly by inducing axonal microtubule catastrophes. Limits microtubule growth near the cellular cortex of early embryonic cells. This chain is Exchange factor for Arf-6, found in Caenorhabditis elegans.